The chain runs to 234 residues: Sugar fermentation stimulation protein A (234 aa).

Residues leucine 201 to serine 220 constitute a DNA-binding region (H-T-H motif).

The protein belongs to the SfsA family.

Functionally, binds to DNA non-specifically. Could be a regulatory factor involved in maltose metabolism. The polypeptide is Sugar fermentation stimulation protein A (Salmonella dublin (strain CT_02021853)).